Reading from the N-terminus, the 367-residue chain is Probable peptidoglycan glycosyltransferase FtsW (367 aa).

Over 1 to 8 the chain is Cytoplasmic; the sequence is MRRVEGYD. The helical transmembrane segment at 9–29 threads the bilayer; that stretch reads MIVLMMAVILTCFGVVMVYSA. The Periplasmic segment spans residues 30-49; that stretch reads SSVMAAKKFHDGFFFLKRQS. The chain crosses the membrane as a helical span at residues 50-70; that stretch reads LYALIGFIGMGVAMHVDYHVW. Residues 71 to 72 are Cytoplasmic-facing; that stretch reads KK. A helical membrane pass occupies residues 73–93; the sequence is WAVPLFLGTFFLLLLVFVPGI. At 94–138 the chain is on the periplasmic side; that stretch reads GGTAKGASRWIRLPGFNFQPSELAKVALIMYMAYSLEKRQDKLKQ. Residues 139–159 traverse the membrane as a helical segment; it reads FMSGFFPYMLILGVFIAVLLA. The Cytoplasmic segment spans residues 160-161; that stretch reads QH. The chain crosses the membrane as a helical span at residues 162-182; that stretch reads DMGAALTMLAVAIVMLFAAGT. Residue lysine 183 is a topological domain, periplasmic. A helical transmembrane segment spans residues 184 to 204; that stretch reads VQYILGMGLVALPGICYLVFT. Topologically, residues 205–225 are cytoplasmic; that stretch reads KAYRMRRITAFLDPWQDPTDA. A helical membrane pass occupies residues 226 to 246; the sequence is GFQIIQSWLALGTGGFFGQGL. Over 247-266 the chain is Periplasmic; sequence GEGKQKLFYLPEAHTDFILS. A helical transmembrane segment spans residues 267–287; that stretch reads VLGEEMGFIGVVVIASMFLLL. At 288–304 the chain is on the cytoplasmic side; that stretch reads VQRSIRVAIAAEDSFGR. The helical transmembrane segment at 305–325 threads the bilayer; that stretch reads FLAFGIAILLGLEAFVNMAVV. The Periplasmic segment spans residues 326–335; the sequence is TGLLPTKGIA. A helical transmembrane segment spans residues 336–356; it reads LPFLSYGGSSLIISLCSVGVL. Topologically, residues 357-367 are cytoplasmic; it reads LNVSTRMRGAA.

The protein belongs to the SEDS family. FtsW subfamily.

Its subcellular location is the cell inner membrane. The enzyme catalyses [GlcNAc-(1-&gt;4)-Mur2Ac(oyl-L-Ala-gamma-D-Glu-L-Lys-D-Ala-D-Ala)](n)-di-trans,octa-cis-undecaprenyl diphosphate + beta-D-GlcNAc-(1-&gt;4)-Mur2Ac(oyl-L-Ala-gamma-D-Glu-L-Lys-D-Ala-D-Ala)-di-trans,octa-cis-undecaprenyl diphosphate = [GlcNAc-(1-&gt;4)-Mur2Ac(oyl-L-Ala-gamma-D-Glu-L-Lys-D-Ala-D-Ala)](n+1)-di-trans,octa-cis-undecaprenyl diphosphate + di-trans,octa-cis-undecaprenyl diphosphate + H(+). It functions in the pathway cell wall biogenesis; peptidoglycan biosynthesis. Functionally, peptidoglycan polymerase that is essential for cell division. The polypeptide is Probable peptidoglycan glycosyltransferase FtsW (Geobacter sp. (strain M18)).